Consider the following 147-residue polypeptide: Ubiquitin-conjugating enzyme E2-16 kDa (147 aa).

Residues 1-147 (MAFKRINKEL…AREWTRKYAI (147 aa)) enclose the UBC core domain. The active-site Glycyl thioester intermediate is Cys-107.

It belongs to the ubiquitin-conjugating enzyme family.

It carries out the reaction S-ubiquitinyl-[E1 ubiquitin-activating enzyme]-L-cysteine + [E2 ubiquitin-conjugating enzyme]-L-cysteine = [E1 ubiquitin-activating enzyme]-L-cysteine + S-ubiquitinyl-[E2 ubiquitin-conjugating enzyme]-L-cysteine.. It functions in the pathway protein modification; protein ubiquitination. Functionally, catalyzes the covalent attachment of ubiquitin to other proteins. May also mediate selective proteolysis pathways. The protein is Ubiquitin-conjugating enzyme E2-16 kDa (UBC1) of Colletotrichum gloeosporioides (Anthracnose fungus).